The chain runs to 256 residues: Carboxysome shell protein CsoS1D (256 aa).

Residues 1-24 (MEPTSSLNRGDRKKGSSLVTGSEV) are disordered. BMC circularly permuted domains follow at residues 55–157 (ELRT…RTKP) and 158–256 (STSW…ISNY). The Gates the pore motif lies at 120–121 (ER).

It belongs to the EutL/PduB family. In terms of assembly, homotrimer. Forms a dimer of stacked trimers, the same faces interact. A CsoS1-CsoS1D-CsoS2 complex can be isolated following expression in E.coli.

Its subcellular location is the carboxysome. Its function is as follows. Part of the carboxysome shell, a polyhedral inclusion where RuBisCO (ribulose bisphosphate carboxylase, cbbL-cbbS) is sequestered. It may control transport of RuBisCO reactants in and out of the carboxysome. There are estimated to be 6 CsoS1D hexamers per carboxysome. The polypeptide is Carboxysome shell protein CsoS1D (Prochlorococcus marinus subsp. pastoris (strain CCMP1986 / NIES-2087 / MED4)).